Here is a 1018-residue protein sequence, read N- to C-terminus: Serine/threonine-protein kinase 31 (1018 aa).

Residues 78–137 form the Tudor domain; it reads NLDPKKIYGGLFSEDKCWYRCKVLKTISDDKCLVRYIDYGNTEILNRSDIVEIPPELQFS. Residues 298-358 are a coiled coil; that stretch reads AKIKQDQKLI…TKHLESTLKT (61 aa). The Protein kinase domain occupies 711–1018; it reads IGLLKYMNSG…EKTRNGEANP (308 aa). ATP contacts are provided by residues 717–725 and lysine 738; that span reads MNSGGLLTM. The disordered stretch occupies residues 988–1018; sequence IECTQHSREDESKMESLDRYSEKTRNGEANP.

Belongs to the protein kinase superfamily. Ser/Thr protein kinase family. As to expression, testis specific. Expressed only in male germ cells.

The catalysed reaction is L-seryl-[protein] + ATP = O-phospho-L-seryl-[protein] + ADP + H(+). It catalyses the reaction L-threonyl-[protein] + ATP = O-phospho-L-threonyl-[protein] + ADP + H(+). In Mus musculus (Mouse), this protein is Serine/threonine-protein kinase 31 (Stk31).